Consider the following 531-residue polypeptide: Flavin-containing monooxygenase 3 (531 aa).

FAD-binding positions include 9-13 (GAGIS), E32, 40-41 (LW), and 61-62 (NS). Residues 60–61 (TN) and 195–198 (SGCD) contribute to the NADP(+) site. The chain crosses the membrane as a helical span at residues 511-531 (FSPWLKLLAIAVLLIAAVLVF).

It belongs to the FMO family. It depends on FAD as a cofactor. As to expression, liver.

It localises to the microsome membrane. Its subcellular location is the endoplasmic reticulum membrane. The catalysed reaction is trimethylamine + NADPH + O2 = trimethylamine N-oxide + NADP(+) + H2O. It catalyses the reaction N,N-dimethylaniline + NADPH + O2 + H(+) = N,N-dimethylaniline N-oxide + NADP(+) + H2O. The enzyme catalyses hypotaurine + NADPH + O2 + H(+) = taurine + NADP(+) + H2O. It carries out the reaction (S)-nicotine + NADPH + O2 = trans-(S)-nicotine N(1')-oxide + NADP(+) + H2O. The catalysed reaction is albendazole + NADPH + O2 + H(+) = albendazole S-oxide + NADP(+) + H2O. Functionally, essential hepatic enzyme that catalyzes the oxygenation of a wide variety of nitrogen- and sulfur-containing compounds including drugs as well as dietary compounds. Plays an important role in the metabolism of trimethylamine (TMA), via the production of trimethylamine N-oxide (TMAO) metabolite. TMA is generated by the action of gut microbiota using dietary precursors such as choline, choline containing compounds, betaine or L-carnitine. By regulating TMAO concentration, FMO3 directly impacts both platelet responsiveness and rate of thrombus formation. The sequence is that of Flavin-containing monooxygenase 3 (FMO3) from Oryctolagus cuniculus (Rabbit).